A 414-amino-acid chain; its full sequence is Sec-independent protein translocase protein TatC (414 aa).

Positions 1–21 are disordered; sequence MTQSTSVSKGGRVSRKAKKNP. The next 6 membrane-spanning stretches (helical) occupy residues 45-65, 119-139, 157-177, 200-220, 238-258, and 259-279; these read IAVT…AWAI, GGLA…WRFI, IAGF…PMGL, FVIA…FTAM, IMIV…DPIS, and MLVL…FTRI. A disordered region spans residues 315-414; that stretch reads IYDGDHKGIA…IQSSSFDDVL (100 aa). The span at 323–336 shows a compositional bias: gly residues; it reads IAGGGDAHPAGGSG. Positions 345-357 are enriched in low complexity; it reads TAPTRAPSASESP. A compositionally biased stretch (polar residues) spans 403-414; sequence DTIQSSSFDDVL.

This sequence belongs to the TatC family. The Tat system comprises two distinct complexes: a TatABC complex, containing multiple copies of TatA, TatB and TatC subunits, and a separate TatA complex, containing only TatA subunits. Substrates initially bind to the TatABC complex, which probably triggers association of the separate TatA complex to form the active translocon.

Its subcellular location is the cell membrane. In terms of biological role, part of the twin-arginine translocation (Tat) system that transports large folded proteins containing a characteristic twin-arginine motif in their signal peptide across membranes. Together with TatB, TatC is part of a receptor directly interacting with Tat signal peptides. The sequence is that of Sec-independent protein translocase protein TatC from Corynebacterium kroppenstedtii (strain DSM 44385 / JCM 11950 / CIP 105744 / CCUG 35717).